A 270-amino-acid chain; its full sequence is tRNA pseudouridine synthase A (270 aa).

Aspartate 60 functions as the Nucleophile in the catalytic mechanism. Residues 107–111 form an RNA binding region; it reads FHARF. Tyrosine 118 is a substrate binding site. Residues 168 to 172 are interaction with tRNA; that stretch reads QCQSR.

It belongs to the tRNA pseudouridine synthase TruA family. As to quaternary structure, homodimer.

It catalyses the reaction uridine(38/39/40) in tRNA = pseudouridine(38/39/40) in tRNA. Functionally, formation of pseudouridine at positions 38, 39 and 40 in the anticodon stem and loop of transfer RNAs. The sequence is that of tRNA pseudouridine synthase A from Klebsiella pneumoniae (strain 342).